The chain runs to 348 residues: ATPase GET3 (348 aa).

26–33 contributes to the ATP binding site; the sequence is KGGVGKTT. Asp57 is an active-site residue. The ATP site is built by Glu241 and Asn268. Zn(2+) is bound by residues Cys280 and Cys283. 310-312 is an ATP binding site; that stretch reads PLL.

It belongs to the arsA ATPase family. Homodimer. Component of the Golgi to ER traffic (GET) complex, which is composed of GET1, GET2 and GET3. Within the complex, GET1 and GET2 form a heterotetramer which is stabilized by phosphatidylinositol binding and which binds to the GET3 homodimer. Interacts with the chloride channel protein GEF1.

Its subcellular location is the cytoplasm. It localises to the endoplasmic reticulum. The protein localises to the golgi apparatus. ATPase required for the post-translational delivery of tail-anchored (TA) proteins to the endoplasmic reticulum. Recognizes and selectively binds the transmembrane domain of TA proteins in the cytosol. This complex then targets to the endoplasmic reticulum by membrane-bound receptors GET1 and GET2, where the tail-anchored protein is released for insertion. This process is regulated by ATP binding and hydrolysis. ATP binding drives the homodimer towards the closed dimer state, facilitating recognition of newly synthesized TA membrane proteins. ATP hydrolysis is required for insertion. Subsequently, the homodimer reverts towards the open dimer state, lowering its affinity for the GET1-GET2 receptor, and returning it to the cytosol to initiate a new round of targeting. Cooperates with the HDEL receptor ERD2 to mediate the ATP-dependent retrieval of resident ER proteins that contain a C-terminal H-D-E-L retention signal from the Golgi to the ER. Involved in low-level resistance to the oxyanions arsenite and arsenate, and in heat tolerance. The polypeptide is ATPase GET3 (Debaryomyces hansenii (strain ATCC 36239 / CBS 767 / BCRC 21394 / JCM 1990 / NBRC 0083 / IGC 2968) (Yeast)).